The chain runs to 282 residues: Tryptophan 2,3-dioxygenase (282 aa).

Residues 51–55, tyrosine 113, and arginine 117 contribute to the substrate site; that span reads FIIQH. Histidine 240 is a binding site for heme. Threonine 254 is a binding site for substrate.

The protein belongs to the tryptophan 2,3-dioxygenase family. In terms of assembly, homotetramer. Requires heme as cofactor.

The catalysed reaction is L-tryptophan + O2 = N-formyl-L-kynurenine. It functions in the pathway amino-acid degradation; L-tryptophan degradation via kynurenine pathway; L-kynurenine from L-tryptophan: step 1/2. In terms of biological role, heme-dependent dioxygenase that catalyzes the oxidative cleavage of the L-tryptophan (L-Trp) pyrrole ring and converts L-tryptophan to N-formyl-L-kynurenine. Catalyzes the oxidative cleavage of the indole moiety. In Polaromonas naphthalenivorans (strain CJ2), this protein is Tryptophan 2,3-dioxygenase.